The following is a 233-amino-acid chain: Cilia- and flagella-associated protein 299 (233 aa).

The protein resides in the cytoplasm. Its subcellular location is the nucleus. In terms of biological role, may be involved in spermatogenesis. This is Cilia- and flagella-associated protein 299 from Xenopus laevis (African clawed frog).